The primary structure comprises 327 residues: Beta-ketoacyl-[acyl-carrier-protein] synthase III 2 (327 aa).

Residues C114 and H251 contribute to the active site. Residues 252 to 256 (SANLR) form an ACP-binding region. N281 is an active-site residue.

This sequence belongs to the thiolase-like superfamily. FabH family. Homodimer.

It is found in the cytoplasm. It catalyses the reaction malonyl-[ACP] + acetyl-CoA + H(+) = 3-oxobutanoyl-[ACP] + CO2 + CoA. It participates in lipid metabolism; fatty acid biosynthesis. Its function is as follows. Catalyzes the condensation reaction of fatty acid synthesis by the addition to an acyl acceptor of two carbons from malonyl-ACP. Catalyzes the first condensation reaction which initiates fatty acid synthesis and may therefore play a role in governing the total rate of fatty acid production. Possesses both acetoacetyl-ACP synthase and acetyl transacylase activities. Its substrate specificity determines the biosynthesis of branched-chain and/or straight-chain of fatty acids. This chain is Beta-ketoacyl-[acyl-carrier-protein] synthase III 2, found in Bacillus cereus (strain ATCC 14579 / DSM 31 / CCUG 7414 / JCM 2152 / NBRC 15305 / NCIMB 9373 / NCTC 2599 / NRRL B-3711).